Consider the following 684-residue polypeptide: Multisite-specific tRNA:(cytosine-C(5))-methyltransferase (684 aa).

Over residues 1-12 the composition is skewed to basic residues; it reads MARRKNFKKGNK. The segment at 1–24 is disordered; the sequence is MARRKNFKKGNKKTFGARDDSRAQ. Residues 173 to 179, Asp-202, Asp-229, and Asp-257 each bind S-adenosyl-L-methionine; that span reads CAAPGSK. Cys-310 (nucleophile) is an active-site residue. The residue at position 426 (Thr-426) is a Phosphothreonine. Ser-431 carries the phosphoserine modification. Residues 650-684 form a disordered region; the sequence is KATPSAEEKEKEKETTESPAETTTGTSTEAPSAAN. The segment covering 655–665 has biased composition (basic and acidic residues); the sequence is AEEKEKEKETT. A compositionally biased stretch (low complexity) spans 666–684; sequence ESPAETTTGTSTEAPSAAN. A Phosphoserine modification is found at Ser-667.

Belongs to the class I-like SAM-binding methyltransferase superfamily. RsmB/NOP family. TRM4 subfamily.

The protein localises to the nucleus. Its subcellular location is the nucleolus. The catalysed reaction is cytidine(34) in tRNA precursor + S-adenosyl-L-methionine = 5-methylcytidine(34) in tRNA precursor + S-adenosyl-L-homocysteine + H(+). It catalyses the reaction cytidine(40) in tRNA precursor + S-adenosyl-L-methionine = 5-methylcytidine(40) in tRNA precursor + S-adenosyl-L-homocysteine + H(+). The enzyme catalyses cytidine(48) in tRNA + S-adenosyl-L-methionine = 5-methylcytidine(48) in tRNA + S-adenosyl-L-homocysteine + H(+). It carries out the reaction cytidine(49) in tRNA + S-adenosyl-L-methionine = 5-methylcytidine(49) in tRNA + S-adenosyl-L-homocysteine + H(+). Its function is as follows. Methylates cytosine to m5C at several positions in different tRNAs and pre-tRNAs containing intron. Able to modify tRNAs at all four positions (34, 40, 48 and 49) at which m5C has been found in tRNAs. May be involved in ribosome biogenesis as its disruption leads to increased sensitivity to the antibiotic paromomycin. The polypeptide is Multisite-specific tRNA:(cytosine-C(5))-methyltransferase (NCL1) (Saccharomyces cerevisiae (strain ATCC 204508 / S288c) (Baker's yeast)).